A 420-amino-acid chain; its full sequence is Carboxypeptidase A4 (420 aa).

An N-terminal signal peptide occupies residues 1-16 (MKWLLFFGALIGAGIC). Positions 17–113 (GRDKFFGDQV…EMQHNEGIER (97 aa)) are cleaved as a propeptide — activation peptide. A protein-binding residues include P69, V71, N118, Y122, H123, E126, and F162. Residues 121 to 415 (AYHPLEAIYH…LGLKTIMEHV (295 aa)) form the Peptidase M14 domain. Zn(2+)-binding residues include H180 and E183. C249 and C272 form a disulfide bridge. The N-linked (GlcNAc...) asparagine glycan is linked to N259. H307 serves as a coordination point for Zn(2+). The Proton donor/acceptor role is filled by E381.

The protein belongs to the peptidase M14 family. Interacts with LXN. It depends on Zn(2+) as a cofactor.

It is found in the secreted. Its function is as follows. Metalloprotease that cleaves hydrophobic C-terminal residues with a preference for -Phe, -Leu, -Ile, -Met, -Tyr and -Val. May function in peptide hormone and/or neuropeptide catabolism. The polypeptide is Carboxypeptidase A4 (Cpa4) (Mus musculus (Mouse)).